We begin with the raw amino-acid sequence, 125 residues long: Protein MGF 110-3L (125 aa).

Over methionine 1 to leucine 6 the chain is Cytoplasmic. Residues glycine 7–leucine 27 traverse the membrane as a helical segment. Over tyrosine 28 to glycine 116 the chain is Extracellular. Asparagine 64 carries an N-linked (GlcNAc...) asparagine; by host glycan.

This sequence belongs to the asfivirus MGF 110 family.

It is found in the host membrane. Plays a role in virus cell tropism, and may be required for efficient virus replication in macrophages. The protein is Protein MGF 110-3L of African swine fever virus (isolate Pig/Kenya/KEN-50/1950) (ASFV).